We begin with the raw amino-acid sequence, 314 residues long: MTNPLNSTAANRSNQPSSDGISDGQITNEEAESLINKKNCSGHKLKEVTDSDTFSDNGKDDSDTKKRFHYHQDQRRMSLTSIVAVESPSSSNAPSRKTIDLGHGSDLIYIQRFLPFQQSWTFFDYLDKHIPWTRPTIRVFGRSCLQPRDTCYVASSGLTALVYSGYRPTSYSWDDFPPLKEILDAIYKVLPGSRFNSLLLNRYKGASDYVAWHADDEKIYGPTPEIASVSFGCERDFVLKKKKDEESSQGKTGDSGPAKKRLKRSSREDQQSLTLKHGSLLVMRGYTQRDWIHSVPKRAKAEGTRINLTFRLVL.

Over residues 1–28 the composition is skewed to polar residues; sequence MTNPLNSTAANRSNQPSSDGISDGQITN. The disordered stretch occupies residues 1-75; the sequence is MTNPLNSTAA…KRFHYHQDQR (75 aa). Over residues 57 to 75 the composition is skewed to basic and acidic residues; that stretch reads NGKDDSDTKKRFHYHQDQR. Substrate contacts are provided by residues W132 and 160-163; that span reads ALVY. Residues 194–314 enclose the Fe2OG dioxygenase domain; it reads RFNSLLLNRY…RINLTFRLVL (121 aa). 201–203 provides a ligand contact to 2-oxoglutarate; it reads NRY. Fe cation-binding residues include H213 and D215. Substrate is bound at residue D216. The tract at residues 242-271 is disordered; that stretch reads KKDEESSQGKTGDSGPAKKRLKRSSREDQQ. H293 contacts Fe cation. Residues R305 and 305-311 contribute to the 2-oxoglutarate site; that span reads RINLTFR.

It belongs to the alkB family. Fe(2+) is required as a cofactor. As to expression, expressed ubiquitously, including in seedlings, leaves and flowers.

Its subcellular location is the nucleus. It carries out the reaction a methylated nucleobase within DNA + 2-oxoglutarate + O2 = a nucleobase within DNA + formaldehyde + succinate + CO2. Functionally, dioxygenase that repairs alkylated DNA containing 1-methyladenine and 1-ethenoadenine by oxidative demethylation. Accepts double-stranded and single-stranded substrates, with a preference for dsDNA over ssDNA. Confers resistance to methylating agents such as methylmethanesulphonate (MMS). The polypeptide is DNA oxidative demethylase ALKBH2 (ALKBH2) (Arabidopsis thaliana (Mouse-ear cress)).